Consider the following 416-residue polypeptide: Histidine--tRNA ligase (416 aa).

The protein belongs to the class-II aminoacyl-tRNA synthetase family.

It is found in the cytoplasm. The catalysed reaction is tRNA(His) + L-histidine + ATP = L-histidyl-tRNA(His) + AMP + diphosphate + H(+). This Methanocaldococcus jannaschii (strain ATCC 43067 / DSM 2661 / JAL-1 / JCM 10045 / NBRC 100440) (Methanococcus jannaschii) protein is Histidine--tRNA ligase (hisS).